Here is a 155-residue protein sequence, read N- to C-terminus: Endoribonuclease YbeY (155 aa).

3 residues coordinate Zn(2+): His-120, His-124, and His-130.

Belongs to the endoribonuclease YbeY family. Zn(2+) serves as cofactor.

It localises to the cytoplasm. Functionally, single strand-specific metallo-endoribonuclease involved in late-stage 70S ribosome quality control and in maturation of the 3' terminus of the 16S rRNA. In Alkaliphilus metalliredigens (strain QYMF), this protein is Endoribonuclease YbeY.